The sequence spans 1040 residues: MPPPPHIKPENVLKRAQELIAVGQAPAALNVLHEHVTSKRTRSSPISSLEPVMLQIVELCVDMRKGKAAKDGLYQYKNIAQNTNVGTIEVVLKKFIELAEKKVTEAQTKADEIQSSLESAAPSANVEDLEAIETPETILLATVSGEQSRDRTDRAVVTPWLKFLWETYRTVLEILKNNARLEVMYQTTALQAFQFCLKYTRKTEFRRLCELLRNHVQNAAKYSAQMHAINLSDPDTLQRHLDTRFQQLNVAVELELWQEAFRSIEDIHTLLSLSKRPAKNVMMANYYEKLARIFLVSENYLFHAAAWSRYYNLLRQSAATLAAGQGTKKENPSVTEADMTKAASFVLLSALAIPVISTSRSRGALVDVDEVRKNKNTRLTNLLGMAQPPTRAVLFKDAMNKGLLKRARPEIRELYNILEVDFHPLSICKKITPILKQIGSDPEMEKYVVPLQQVILTRLFQQLSQVYESVELKFVYELAQFPDPFQITPAMIEKFIMNGCKKGDLAIRVDHISGVLTFDSDVFSSAKALHPGSAAGSAESEVGSVQRLQNTPAEIARLQLTRLAKTLHVSCMYVDPSYNESRIQAKQTAQARALAGAAKEHEETLARRVIIEKKKEAATDALQRKQREEETRKRIRTQQLQEAEKQRLLDEQREREKKRIKDEQDRIRQQELKKQLEELKSGVKGIDINEIDLQDLDANRLRAMKLAQLEKEKNELNDRIRTTGKRIDHLERAFRREELKHIPEDYEAQKKRDMEIYEATKAETLKEAELKHKEAVALKHRLSRLVPHFNSFRKEVSEKRHEEFEKRRKAAERDFEAKKKQRVKEVQERRRREKMEREMAERQRKEEEERAQREEEEKRARDEERRRVLAEEKAKREEERKRLDEIAAKQKQREEEAEARRAARKAGLEPAAPAARPEPTERTAPRLNIAPRTGGPSWRERQAAKEAAGGAAPEAAPKEEAPQPARRPGGYVPPHLRSGSSAAPAAPPSNGAPERYVPRHARESSSSQPPSRTQTPGSDKPSEGGSAGKWVPRWKQQQNQ.

Residues 92-121 (LKKFIELAEKKVTEAQTKADEIQSSLESAA) are a coiled coil. The PCI domain maps to 339 to 523 (MTKAASFVLL…GVLTFDSDVF (185 aa)). Positions 608-906 (RVIIEKKKEA…AEARRAARKA (299 aa)) form a coiled coil. Basic and acidic residues-rich tracts occupy residues 617–632 (AATDALQRKQREEETR) and 795–901 (EVSE…EARR). 2 disordered regions span residues 617 to 641 (AATDALQRKQREEETRKRIRTQQLQ) and 795 to 1040 (EVSE…QQNQ). Composition is skewed to low complexity over residues 908-917 (LEPAAPAARP), 945-955 (KEAAGGAAPEA), 978-993 (SGSSAAPAAPPSNGAP), and 1004-1018 (SSSSQPPSRTQTPGS).

This sequence belongs to the eIF-3 subunit A family. In terms of assembly, component of the eukaryotic translation initiation factor 3 (eIF-3) complex.

It is found in the cytoplasm. Its function is as follows. RNA-binding component of the eukaryotic translation initiation factor 3 (eIF-3) complex, which is involved in protein synthesis of a specialized repertoire of mRNAs and, together with other initiation factors, stimulates binding of mRNA and methionyl-tRNAi to the 40S ribosome. The eIF-3 complex specifically targets and initiates translation of a subset of mRNAs involved in cell proliferation. The chain is Eukaryotic translation initiation factor 3 subunit A (tif32) from Aspergillus terreus (strain NIH 2624 / FGSC A1156).